A 337-amino-acid polypeptide reads, in one-letter code: S-adenosylmethionine:tRNA ribosyltransferase-isomerase (337 aa).

Belongs to the QueA family. As to quaternary structure, monomer.

Its subcellular location is the cytoplasm. The catalysed reaction is 7-aminomethyl-7-carbaguanosine(34) in tRNA + S-adenosyl-L-methionine = epoxyqueuosine(34) in tRNA + adenine + L-methionine + 2 H(+). The protein operates within tRNA modification; tRNA-queuosine biosynthesis. Transfers and isomerizes the ribose moiety from AdoMet to the 7-aminomethyl group of 7-deazaguanine (preQ1-tRNA) to give epoxyqueuosine (oQ-tRNA). This is S-adenosylmethionine:tRNA ribosyltransferase-isomerase from Legionella pneumophila (strain Paris).